The following is a 339-amino-acid chain: Uroporphyrinogen decarboxylase (339 aa).

Residues 21-25 (RQAGR), Asp71, Tyr147, Ser202, and His315 each bind substrate.

Belongs to the uroporphyrinogen decarboxylase family. In terms of assembly, homodimer.

It is found in the cytoplasm. The enzyme catalyses uroporphyrinogen III + 4 H(+) = coproporphyrinogen III + 4 CO2. Its pathway is porphyrin-containing compound metabolism; protoporphyrin-IX biosynthesis; coproporphyrinogen-III from 5-aminolevulinate: step 4/4. Catalyzes the decarboxylation of four acetate groups of uroporphyrinogen-III to yield coproporphyrinogen-III. The protein is Uroporphyrinogen decarboxylase of Helicobacter acinonychis (strain Sheeba).